Reading from the N-terminus, the 115-residue chain is Large ribosomal subunit protein uL22 (115 aa).

It belongs to the universal ribosomal protein uL22 family. Part of the 50S ribosomal subunit.

In terms of biological role, this protein binds specifically to 23S rRNA; its binding is stimulated by other ribosomal proteins, e.g. L4, L17, and L20. It is important during the early stages of 50S assembly. It makes multiple contacts with different domains of the 23S rRNA in the assembled 50S subunit and ribosome. Functionally, the globular domain of the protein is located near the polypeptide exit tunnel on the outside of the subunit, while an extended beta-hairpin is found that lines the wall of the exit tunnel in the center of the 70S ribosome. The polypeptide is Large ribosomal subunit protein uL22 (Endomicrobium trichonymphae).